The chain runs to 1644 residues: Kinesin-like protein unc-104 (1644 aa).

The 349-residue stretch at Ser-3 to Ile-351 folds into the Kinesin motor domain. An ATP-binding site is contributed by Gly-97–Ser-104. A coiled-coil region spans residues Asn-358–Glu-436. The FHA domain maps to Thr-499 to Gly-565. A compositionally biased stretch (basic and acidic residues) spans His-574 to Gly-591. The tract at residues His-574–Ala-598 is disordered. The stretch at Glu-631–Tyr-672 forms a coiled coil. 2 disordered regions span residues Glu-953–Gly-985 and His-1419–Glu-1440. Over residues Glu-969–Pro-984 the composition is skewed to basic and acidic residues. Polar residues predominate over residues Thr-1428 to Thr-1437. The region spanning Val-1542–Ala-1640 is the PH domain.

Belongs to the TRAFAC class myosin-kinesin ATPase superfamily. Kinesin family. Unc-104 subfamily. As to quaternary structure, monomer.

Its subcellular location is the cytoplasm. The protein localises to the cytoskeleton. In terms of biological role, required for presynaptic maturation, has a role in axonal transport of dense-core vesicles carrying synaptic vesicle precursors, components required for the morphological transformation of axonal growth cones to mature boutons. The polypeptide is Kinesin-like protein unc-104 (Aedes aegypti (Yellowfever mosquito)).